Consider the following 339-residue polypeptide: MSMLMAVKTTSLCCSSLNLTASPTFRRNPRAARLVNPTARIQTRFHRLIEEQGIVLMPGCYDALSAAIVQQTGFSAGFISGYALSASLLGKPDFGLLTPPEMAATARSVCASAPNIPIIADADTGGGNALNIQRTVKDLIAAGAAGCFLEDQAWPKKCGHMRGKQVIPAEEHAAKIASARDAIGDSDFFLVARTDVRATSAKSGLEDAIARVNLYMEAGADASFVEAPRDDDELKEIGKRTKGYRVCNMIEGGVTPLHTPDELKEMGFHLIVHPLTALYASTRALVDVLKTLKENGSTRDHLQKMATFEEFNSLVDLDSWFELEARYSNLRNALGTTKS.

The N-terminal 30 residues, 1-30 (MSMLMAVKTTSLCCSSLNLTASPTFRRNPR), are a transit peptide targeting the chloroplast.

It belongs to the isocitrate lyase/PEP mutase superfamily.

Its subcellular location is the plastid. It is found in the chloroplast. It catalyses the reaction 1-carboxyvinyl carboxyphosphonate + H(+) = 3-(hydrohydroxyphosphoryl)pyruvate + CO2. This Arabidopsis thaliana (Mouse-ear cress) protein is Carboxyvinyl-carboxyphosphonate phosphorylmutase, chloroplastic.